Here is a 259-residue protein sequence, read N- to C-terminus: MIKDTQSTAENQANETTHFGFKTVAKEEKQQLVANVFHSVAAKYDLMNDLLSFGIHRIWKRFTIDCSGVRKGQKVLDLAGGTGDFSAKFSRIVGETGQVVLADINSSMLEVGRDKLRNLGVVGNINYVQANAEHLPFADNTFDCVVISFGLRNVTDKDKALKSMYRVLKPGGRLLVLEFSKPIFDPISQLYNFYSFNILPKVGGIVVNDAESYRYLAESIRMHPKQDELKTMMEHAGFESVNYYNLSAGIVALHRGYKF.

S-adenosyl-L-methionine contacts are provided by residues threonine 82, aspartate 103, 131–132 (NA), and serine 148.

Belongs to the class I-like SAM-binding methyltransferase superfamily. MenG/UbiE family.

The catalysed reaction is a 2-demethylmenaquinol + S-adenosyl-L-methionine = a menaquinol + S-adenosyl-L-homocysteine + H(+). It catalyses the reaction a 2-methoxy-6-(all-trans-polyprenyl)benzene-1,4-diol + S-adenosyl-L-methionine = a 5-methoxy-2-methyl-3-(all-trans-polyprenyl)benzene-1,4-diol + S-adenosyl-L-homocysteine + H(+). It participates in quinol/quinone metabolism; menaquinone biosynthesis; menaquinol from 1,4-dihydroxy-2-naphthoate: step 2/2. Its pathway is cofactor biosynthesis; ubiquinone biosynthesis. In terms of biological role, methyltransferase required for the conversion of demethylmenaquinol (DMKH2) to menaquinol (MKH2) and the conversion of 2-polyprenyl-6-methoxy-1,4-benzoquinol (DDMQH2) to 2-polyprenyl-3-methyl-6-methoxy-1,4-benzoquinol (DMQH2). The sequence is that of Ubiquinone/menaquinone biosynthesis C-methyltransferase UbiE from Haemophilus ducreyi (strain 35000HP / ATCC 700724).